Reading from the N-terminus, the 219-residue chain is GTP-binding protein drn-1 (219 aa).

GTP-binding positions include 37 to 44 (GAGGVGKS), 56 to 62 (NENYVPT), 85 to 89 (DTTGS), 146 to 149 (NKKD), and 177 to 178 (AK). An Effector region motif is present at residues 59-67 (YVPTIEDTY). C216 is subject to Cysteine methyl ester. The S-geranylgeranyl cysteine moiety is linked to residue C216. Residues 217–219 (HIM) constitute a propeptide, removed in mature form.

This sequence belongs to the small GTPase superfamily. Di-Ras family. As to quaternary structure, interacts with epac-1 (via C-terminus). In terms of tissue distribution, expressed specifically in neurons including the nerve ring, ventral and dorsal nerve cord motor neurons and tail ganglia.

It is found in the cell membrane. Displays low GTPase activity and exists predominantly in the GTP-bound form. Together with epac-1, may regulate acetylcholine release at the neuromuscular junctions probably downstream of G-protein gsa-1 and adenylate cyclase acy-1. The protein is GTP-binding protein drn-1 of Caenorhabditis elegans.